The chain runs to 99 residues: DNA-binding protein Fis (99 aa).

The segment at residues 75–94 (QTRAAIMMGINRGTLRKKLK) is a DNA-binding region (H-T-H motif).

The protein belongs to the transcriptional regulatory Fis family. In terms of assembly, homodimer.

Its function is as follows. Activates ribosomal RNA transcription. Plays a direct role in upstream activation of rRNA promoters. The protein is DNA-binding protein Fis of Tolumonas auensis (strain DSM 9187 / NBRC 110442 / TA 4).